A 551-amino-acid chain; its full sequence is Glucose-6-phosphate isomerase 2 (551 aa).

The Proton donor role is filled by Glu359. Active-site residues include His390 and Lys514.

It belongs to the GPI family.

The protein localises to the cytoplasm. The catalysed reaction is alpha-D-glucose 6-phosphate = beta-D-fructose 6-phosphate. The protein operates within carbohydrate biosynthesis; gluconeogenesis. It functions in the pathway carbohydrate degradation; glycolysis; D-glyceraldehyde 3-phosphate and glycerone phosphate from D-glucose: step 2/4. In terms of biological role, catalyzes the reversible isomerization of glucose-6-phosphate to fructose-6-phosphate. The sequence is that of Glucose-6-phosphate isomerase 2 from Streptomyces coelicolor (strain ATCC BAA-471 / A3(2) / M145).